Here is a 369-residue protein sequence, read N- to C-terminus: Chaperone protein DnaJ (369 aa).

Residues 4 to 69 (SYYEILEVEK…KKRALYDRYG (66 aa)) enclose the J domain. The CR-type zinc-finger motif lies at 130 to 207 (GCKKTIKAQY…CKGKTYILKD (78 aa)). Zn(2+) contacts are provided by C143, C146, C159, C162, C181, C184, C195, and C198. CXXCXGXG motif repeat units follow at residues 143–150 (CESCDGTG), 159–166 (CKQCNGQG), 181–188 (CGACQGKG), and 195–202 (CQACKGKT).

Belongs to the DnaJ family. Homodimer. Requires Zn(2+) as cofactor.

The protein resides in the cytoplasm. Participates actively in the response to hyperosmotic and heat shock by preventing the aggregation of stress-denatured proteins and by disaggregating proteins, also in an autonomous, DnaK-independent fashion. Unfolded proteins bind initially to DnaJ; upon interaction with the DnaJ-bound protein, DnaK hydrolyzes its bound ATP, resulting in the formation of a stable complex. GrpE releases ADP from DnaK; ATP binding to DnaK triggers the release of the substrate protein, thus completing the reaction cycle. Several rounds of ATP-dependent interactions between DnaJ, DnaK and GrpE are required for fully efficient folding. Also involved, together with DnaK and GrpE, in the DNA replication of plasmids through activation of initiation proteins. The sequence is that of Chaperone protein DnaJ from Helicobacter pylori (strain J99 / ATCC 700824) (Campylobacter pylori J99).